The sequence spans 1750 residues: Protein TIC 214 (1750 aa).

Transmembrane regions (helical) follow at residues 12–32, 69–89, 97–117, 129–149, 177–197, and 216–236; these read KIIN…ALSI, FIMG…YVAL, ILAL…SFFA, LEIY…SCIL, FAWF…LVWI, and IFVI…SIQC. Basic and acidic residues predominate over residues 260 to 277; the sequence is RERLQKEEERGVEKKEQS. Disordered stretches follow at residues 260–282, 617–638, 718–738, 1205–1225, and 1419–1512; these read RERL…EEDP, ATTT…KKES, STDK…KQRE, RNSR…PKPV, and ETDS…NKKE. The span at 617–629 shows a compositional bias: low complexity; sequence ATTTNSKTNTTKD. Residues 727-738 are compositionally biased toward basic and acidic residues; sequence KKEEKRENKQRE. A compositionally biased stretch (basic and acidic residues) spans 1420 to 1512; the sequence is TDSKQKSETD…TKSDKKNKKE (93 aa).

This sequence belongs to the TIC214 family. In terms of assembly, part of the Tic complex.

It is found in the plastid. The protein localises to the chloroplast inner membrane. Involved in protein precursor import into chloroplasts. May be part of an intermediate translocation complex acting as a protein-conducting channel at the inner envelope. The sequence is that of Protein TIC 214 from Cuscuta reflexa (Southern Asian dodder).